Here is a 359-residue protein sequence, read N- to C-terminus: tRNA-specific 2-thiouridylase MnmA (359 aa).

ATP contacts are provided by residues 6-13 and Leu-32; that span reads AMSGGVDS. Cys-97 (nucleophile) is an active-site residue. Cys-97 and Cys-195 form a disulfide bridge. An ATP-binding site is contributed by Gly-121. Residues 144 to 146 form an interaction with tRNA region; that stretch reads KDQ. Cys-195 functions as the Cysteine persulfide intermediate in the catalytic mechanism.

It belongs to the MnmA/TRMU family.

It is found in the cytoplasm. The catalysed reaction is S-sulfanyl-L-cysteinyl-[protein] + uridine(34) in tRNA + AH2 + ATP = 2-thiouridine(34) in tRNA + L-cysteinyl-[protein] + A + AMP + diphosphate + H(+). Its function is as follows. Catalyzes the 2-thiolation of uridine at the wobble position (U34) of tRNA, leading to the formation of s(2)U34. This chain is tRNA-specific 2-thiouridylase MnmA, found in Tropheryma whipplei (strain TW08/27) (Whipple's bacillus).